The primary structure comprises 238 residues: Group 3 late-embryogenesis abundant protein, mitochondrial (238 aa).

The segment at 41–62 (SSGSGRPADNWAESQKEKAKAG) is disordered. Residues 50–202 (NWAESQKEKA…AGDLKDKAQQ (153 aa)) adopt a coiled-coil conformation. LEA 11-mer repeat repeat units lie at residues 64–74 (KDAQAEVGKVA), 89–99 (KDAVKQGANDL), 140–150 (KEAAENAWEKT), 151–161 (KDVAENLKDKV), 179–189 (KDRAQDAASEV), and 190–200 (KHKAGDLKDKA). 2 stretches are compositionally biased toward basic and acidic residues: residues 182–200 (AQDA…KDKA) and 213–225 (DNRK…RRDS). Residues 182–238 (AQDAASEVKHKAGDLKDKAQQVIHDATTQSGDNRKQDQQQRRDSQGSQSGQNSRSRN) are disordered. Positions 226-238 (QGSQSGQNSRSRN) are enriched in low complexity.

Belongs to the LEA type 4 family.

The protein localises to the mitochondrion. Its function is as follows. Mitochondrial heat soluble protein acting as a molecular shield in water-deficient condition. In Hypsibius exemplaris (Freshwater tardigrade), this protein is Group 3 late-embryogenesis abundant protein, mitochondrial.